Reading from the N-terminus, the 784-residue chain is DNA repair and recombination protein RAD54-like (784 aa).

The required for chromatin remodeling, strand pairing activities and coupling of ATPase activity stretch occupies residues R2 to Q9. T22 is modified (phosphothreonine). The region spanning E169–E344 is the Helicase ATP-binding domain. D182–T189 is an ATP binding site. A DEGH box motif is present at residues D295–H298. The Helicase C-terminal domain maps to L501–T658. The segment at Q742 to F784 is disordered. A compositionally biased stretch (basic and acidic residues) spans K745–A754.

It belongs to the SNF2/RAD54 helicase family. In terms of assembly, interacts (via N-terminus) with spn-A/Rad51.

It is found in the nucleus. In terms of biological role, involved in mitotic DNA repair and meiotic recombination. Functions in the recombinational DNA repair pathway. Essential for interhomolog gene conversion (GC), but may have a less important role in intersister GC than spn-A/Rad51. In the presence of DNA, spn-A/Rad51 enhances the ATPase activity of okr/Rad54. In Drosophila willistoni (Fruit fly), this protein is DNA repair and recombination protein RAD54-like.